The chain runs to 166 residues: Large ribosomal subunit protein uL10 (166 aa).

The protein belongs to the universal ribosomal protein uL10 family. As to quaternary structure, part of the ribosomal stalk of the 50S ribosomal subunit. The N-terminus interacts with L11 and the large rRNA to form the base of the stalk. The C-terminus forms an elongated spine to which L12 dimers bind in a sequential fashion forming a multimeric L10(L12)X complex.

Functionally, forms part of the ribosomal stalk, playing a central role in the interaction of the ribosome with GTP-bound translation factors. This is Large ribosomal subunit protein uL10 from Pelagibacter ubique (strain HTCC1062).